Here is a 251-residue protein sequence, read N- to C-terminus: Cell division protein ZapD (251 aa).

The protein belongs to the ZapD family. As to quaternary structure, interacts with FtsZ.

Its subcellular location is the cytoplasm. In terms of biological role, cell division factor that enhances FtsZ-ring assembly. Directly interacts with FtsZ and promotes bundling of FtsZ protofilaments, with a reduction in FtsZ GTPase activity. This Burkholderia ambifaria (strain MC40-6) protein is Cell division protein ZapD.